Consider the following 294-residue polypeptide: Nucleotide-binding protein Swol_0262 (294 aa).

An ATP-binding site is contributed by 15–22; the sequence is GLSGAGKT. Residue 65–68 participates in GTP binding; that stretch reads DVRG.

This sequence belongs to the RapZ-like family.

In terms of biological role, displays ATPase and GTPase activities. The chain is Nucleotide-binding protein Swol_0262 from Syntrophomonas wolfei subsp. wolfei (strain DSM 2245B / Goettingen).